A 419-amino-acid polypeptide reads, in one-letter code: uncharacterized protein (419 aa).

The [4Fe-4S] cluster site is built by cysteine 38, cysteine 44, cysteine 47, and cysteine 126. S-adenosyl-L-methionine-binding residues include glutamine 250, tyrosine 280, glutamate 301, and aspartate 346. Cysteine 373 acts as the Nucleophile in catalysis.

The protein belongs to the class I-like SAM-binding methyltransferase superfamily. RNA M5U methyltransferase family.

This is an uncharacterized protein from Prochlorococcus marinus (strain SARG / CCMP1375 / SS120).